We begin with the raw amino-acid sequence, 191 residues long: Apoptosis regulator BHRF1 (191 aa).

The tract at residues 1–18 (MAYSTREILLALCIRDSR) is interaction with host VRK2. Residue asparagine 22 is glycosylated (N-linked (GlcNAc...) asparagine; by host). The BH1 motif lies at 89-109 (EIFHRGDPSLGRALAWMAWCM). The interval 89-142 (EIFHRGDPSLGRALAWMAWCMHACRTLCCNQSTPYYVVDLSVRGMLEASEGLDG) is interaction with host VRK2. A glycan (N-linked (GlcNAc...) asparagine; by host) is linked at asparagine 118. Residues 142 to 157 (GWIHQQGGWSTLIEDN) carry the BH2 motif. The chain crosses the membrane as a helical span at residues 166–186 (WTLFLAGLTLSLLVICSYLFI).

It belongs to the Bcl-2 family. In terms of assembly, interacts with isoform 1 of host VRK2; this interaction is involved in protecting cells from apoptosis. Interacts with host PRA1; this interaction seems to modulate BHRF1 anti-apoptotic activity. Interacts with host BCL2L11. Interacts with host BAD and BBC3. Interacts with BALF1; BALF1 acting as a negative regulator of the survival function of BHRF1. Interacts with host BECN1.

It localises to the host membrane. Its subcellular location is the host mitochondrion. In terms of biological role, prevents premature death of the host cell during virus production, which would otherwise reduce the amount of progeny virus. Acts as a host B-cell leukemia/lymphoma 2 (Bcl-2) homolog, and interacts with pro-apoptotic proteins to prevent mitochondria permeabilization, release of cytochrome c and subsequent apoptosis of the host cell. In addition, plays a role in the inhibiton of host BECN1-mediated starvation-induced autophagy without affecting basal levels of autophagy. The sequence is that of Apoptosis regulator BHRF1 from Epstein-Barr virus (strain GD1) (HHV-4).